Here is a 338-residue protein sequence, read N- to C-terminus: Tryptophan--tRNA ligase (338 aa).

Residues 11 to 13 and 19 to 20 contribute to the ATP site; these read QPS and GN. Residues 12–20 carry the 'HIGH' region motif; sequence PSGELSIGN. Asp-135 serves as a coordination point for L-tryptophan. ATP contacts are provided by residues 147–149, Val-189, and 198–202; these read GSD and KMSKS. Positions 198 to 202 match the 'KMSKS' region motif; the sequence is KMSKS.

This sequence belongs to the class-I aminoacyl-tRNA synthetase family. As to quaternary structure, homodimer.

It localises to the cytoplasm. It carries out the reaction tRNA(Trp) + L-tryptophan + ATP = L-tryptophyl-tRNA(Trp) + AMP + diphosphate + H(+). Its function is as follows. Catalyzes the attachment of tryptophan to tRNA(Trp). This chain is Tryptophan--tRNA ligase, found in Vibrio vulnificus (strain YJ016).